Here is a 781-residue protein sequence, read N- to C-terminus: Penicillin-binding protein 1B (781 aa).

Residues 151–322 (FRLAPKLIAM…SLYNPWRNPQ (172 aa)) form a transglycosylase region. Residue glutamate 188 is the Proton donor; for transglycosylase activity of the active site. Residues 415 to 702 (SQLQLKMKNP…ALQIYKDYLN (288 aa)) are transpeptidase. Serine 466 (acyl-ester intermediate; for transpeptidase activity) is an active-site residue. Residues 749–768 (ETSSPSLTPTTETETPPQES) show a composition bias toward low complexity. The interval 749–781 (ETSSPSLTPTTETETPPQESLWDVLDNPNPPAQ) is disordered.

This sequence in the N-terminal section; belongs to the glycosyltransferase 51 family. It in the C-terminal section; belongs to the transpeptidase family.

Its subcellular location is the cell inner membrane. It catalyses the reaction [GlcNAc-(1-&gt;4)-Mur2Ac(oyl-L-Ala-gamma-D-Glu-L-Lys-D-Ala-D-Ala)](n)-di-trans,octa-cis-undecaprenyl diphosphate + beta-D-GlcNAc-(1-&gt;4)-Mur2Ac(oyl-L-Ala-gamma-D-Glu-L-Lys-D-Ala-D-Ala)-di-trans,octa-cis-undecaprenyl diphosphate = [GlcNAc-(1-&gt;4)-Mur2Ac(oyl-L-Ala-gamma-D-Glu-L-Lys-D-Ala-D-Ala)](n+1)-di-trans,octa-cis-undecaprenyl diphosphate + di-trans,octa-cis-undecaprenyl diphosphate + H(+). It carries out the reaction Preferential cleavage: (Ac)2-L-Lys-D-Ala-|-D-Ala. Also transpeptidation of peptidyl-alanyl moieties that are N-acyl substituents of D-alanine.. Its pathway is cell wall biogenesis; peptidoglycan biosynthesis. Cell wall formation. Synthesis of cross-linked peptidoglycan from the lipid intermediates. The enzyme has a penicillin-insensitive transglycosylase N-terminal domain (formation of linear glycan strands) and a penicillin-sensitive transpeptidase C-terminal domain (cross-linking of the peptide subunits). The polypeptide is Penicillin-binding protein 1B (mrcB) (Haemophilus influenzae (strain ATCC 51907 / DSM 11121 / KW20 / Rd)).